The sequence spans 275 residues: Diaminopimelate epimerase (275 aa).

Positions 13, 46, and 66 each coordinate substrate. Catalysis depends on cysteine 75, which acts as the Proton donor. Substrate-binding positions include 76–77, asparagine 159, asparagine 192, and 210–211; these read GN and ER. Catalysis depends on cysteine 219, which acts as the Proton acceptor. 220-221 provides a ligand contact to substrate; sequence GT.

Belongs to the diaminopimelate epimerase family. Homodimer.

It is found in the cytoplasm. It carries out the reaction (2S,6S)-2,6-diaminopimelate = meso-2,6-diaminopimelate. It functions in the pathway amino-acid biosynthesis; L-lysine biosynthesis via DAP pathway; DL-2,6-diaminopimelate from LL-2,6-diaminopimelate: step 1/1. In terms of biological role, catalyzes the stereoinversion of LL-2,6-diaminopimelate (L,L-DAP) to meso-diaminopimelate (meso-DAP), a precursor of L-lysine and an essential component of the bacterial peptidoglycan. The sequence is that of Diaminopimelate epimerase from Psychromonas ingrahamii (strain DSM 17664 / CCUG 51855 / 37).